The primary structure comprises 538 residues: Putative cysteine ligase BshC (538 aa).

Positions Lys460–Gln483 form a coiled coil.

It belongs to the BshC family.

Functionally, involved in bacillithiol (BSH) biosynthesis. May catalyze the last step of the pathway, the addition of cysteine to glucosamine malate (GlcN-Mal) to generate BSH. The sequence is that of Putative cysteine ligase BshC from Bacillus mycoides (strain KBAB4) (Bacillus weihenstephanensis).